A 369-amino-acid polypeptide reads, in one-letter code: UDP-N-acetylglucosamine--N-acetylmuramyl-(pentapeptide) pyrophosphoryl-undecaprenol N-acetylglucosamine transferase (369 aa).

UDP-N-acetyl-alpha-D-glucosamine is bound by residues 16 to 18 (TGG), N130, R171, S203, I253, and Q298.

It belongs to the glycosyltransferase 28 family. MurG subfamily.

The protein resides in the cell inner membrane. The enzyme catalyses di-trans,octa-cis-undecaprenyl diphospho-N-acetyl-alpha-D-muramoyl-L-alanyl-D-glutamyl-meso-2,6-diaminopimeloyl-D-alanyl-D-alanine + UDP-N-acetyl-alpha-D-glucosamine = di-trans,octa-cis-undecaprenyl diphospho-[N-acetyl-alpha-D-glucosaminyl-(1-&gt;4)]-N-acetyl-alpha-D-muramoyl-L-alanyl-D-glutamyl-meso-2,6-diaminopimeloyl-D-alanyl-D-alanine + UDP + H(+). It functions in the pathway cell wall biogenesis; peptidoglycan biosynthesis. Functionally, cell wall formation. Catalyzes the transfer of a GlcNAc subunit on undecaprenyl-pyrophosphoryl-MurNAc-pentapeptide (lipid intermediate I) to form undecaprenyl-pyrophosphoryl-MurNAc-(pentapeptide)GlcNAc (lipid intermediate II). This Cytophaga hutchinsonii (strain ATCC 33406 / DSM 1761 / CIP 103989 / NBRC 15051 / NCIMB 9469 / D465) protein is UDP-N-acetylglucosamine--N-acetylmuramyl-(pentapeptide) pyrophosphoryl-undecaprenol N-acetylglucosamine transferase.